The primary structure comprises 1511 residues: Pleiotropic ABC efflux transporter of multiple drugs (1511 aa).

Polar residues predominate over residues 1-14; it reads MPEAKLNNNVNDVT. Residues 1 to 32 form a disordered region; that stretch reads MPEAKLNNNVNDVTSYSSASSSTENAADLHNY. Residues 1-517 are Cytoplasmic-facing; that stretch reads MPEAKLNNNV…LLIRNMWRLR (517 aa). Ser22 bears the Phosphoserine mark. 2 positions are modified to phosphothreonine: Thr49 and Thr51. Residues 52 to 71 are disordered; the sequence is AQSMQNSTQSAPNKSDAQSI. A phosphoserine mark is found at Ser54, Ser58, and Ser61. An ABC transporter 1 domain is found at 161-410; sequence LRKFQRSKET…FEDMGYVCPS (250 aa). The helical transmembrane segment at 518-542 threads the bilayer; the sequence is NNIGFTLFMILGNCSMALILGSMFF. The Extracellular portion of the chain corresponds to 543–558; the sequence is KIMKKGDTSTFYFRGS. A helical transmembrane segment spans residues 559–579; that stretch reads AMFFAILFNAFSSLLEIFSLY. Residues 580–611 are Cytoplasmic-facing; sequence EARPITEKHRTYSLYHPSADAFASVLSEIPSK. Residues 612–628 form a helical membrane-spanning segment; the sequence is LIIAVCFNIIFYFLVDF. The Extracellular portion of the chain corresponds to 629 to 631; the sequence is RRN. Residues 632–650 traverse the membrane as a helical segment; it reads GGVFFFYLLINIVAVFSMS. Residues 651–665 are Cytoplasmic-facing; the sequence is HLFRCVGSLTKTLSE. Residues 666–685 form a helical membrane-spanning segment; it reads AMVPASMLLLALSMYTGFAI. Over 686–774 the chain is Extracellular; sequence PKKKILRWSK…QYYHKDKWRG (89 aa). Residue Asn734 is glycosylated (N-linked (GlcNAc...) asparagine). Residues 775–793 traverse the membrane as a helical segment; sequence FGIGMAYVVFFFFVYLFLC. Residues 794 to 1237 lie on the Cytoplasmic side of the membrane; that stretch reads EYNEGAKQKG…GTSLQGLQNQ (444 aa). A disordered region spans residues 824–858; sequence EKNANDPENVGERSDLSSDRKMLQESSEEESDTYG. Lys825 is covalently cross-linked (Glycyl lysine isopeptide (Lys-Gly) (interchain with G-Cter in ubiquitin)). Basic and acidic residues predominate over residues 833–846; that stretch reads VGERSDLSSDRKML. Phosphoserine is present on residues Ser837, Ser840, Ser841, Ser849, Ser850, and Ser854. One can recognise an ABC transporter 2 domain in the interval 869–1112; sequence FHWRNLCYEV…MIDYFESHGA (244 aa). An ATP-binding site is contributed by 905–912; that stretch reads GASGAGKT. A helical membrane pass occupies residues 1238–1260; it reads MLAVFMFTVIFNPILQQYLPSFV. Topologically, residues 1261 to 1291 are extracellular; that stretch reads QQRDLYEARERPSRTFSWISFIFAQIFVEVP. The chain crosses the membrane as a helical span at residues 1292–1313; sequence WNILAGTIAYFIYYYPIGFYSN. The Cytoplasmic segment spans residues 1314–1324; the sequence is ASAAGQLHERG. A helical transmembrane segment spans residues 1325 to 1349; that stretch reads ALFWLFSCAFYVYVGSMGLLVISFN. Topologically, residues 1350 to 1354 are extracellular; it reads QVAES. The helical transmembrane segment at 1355-1379 threads the bilayer; the sequence is AANLASLLFTMSLSFCGVMTTPSAM. Residues 1380 to 1388 are Cytoplasmic-facing; sequence PRFWIFMYR. The helical transmembrane segment at 1389–1407 threads the bilayer; that stretch reads VSPLTYFIQALLAVGVANV. Topologically, residues 1408 to 1476 are extracellular; the sequence is DVKCADYELL…VNSFYSERWR (69 aa). Asn1447 carries an N-linked (GlcNAc...) asparagine glycan. A helical membrane pass occupies residues 1477–1499; the sequence is NYGIFICYIAFNYIAGVFFYWLA. Over 1500 to 1511 the chain is Cytoplasmic; it reads RVPKKNGKLSKK.

This sequence belongs to the ABC transporter superfamily. ABCG family. PDR (TC 3.A.1.205) subfamily. Post-translationally, ubiquitinylation mediates endocytosis and vacuolar degradation. Phosphorylation by casein kinase I stabilizes the protein half-life.

The protein localises to the cell membrane. FK506, isonitrile, enniatin, RU49953, kitasatospora E420, staurosporine CGP42700, prenyl-flavonoids, D-octapeptides were found to be inhibitors in vivo. Vanadate and oligomycin were found to be inhibitors in vitro. In terms of biological role, active efflux of weakly charged organic compounds of 90 cubic Angstroms to 300 cubic Angstroms surface volume. Confers resistance to numerous chemicals including cycloheximide, sulfomethuron methyl, steroids, antiseptics, antibiotics, anticancer, herbicides, mycotoxins, insecticides, ionophores, alkaloids, flavonoids, phenothiazines, organotin compounds, carbazoles, lysosomotropic aminoesters, detergents, rhodamines and other fluorophores, azoles and other antifungals. Exhibits nucleoside triphosphatase activity. The protein is Pleiotropic ABC efflux transporter of multiple drugs (PDR5) of Saccharomyces cerevisiae (strain ATCC 204508 / S288c) (Baker's yeast).